Here is a 349-residue protein sequence, read N- to C-terminus: Isopentenyl-diphosphate delta-isomerase (349 aa).

5-6 (RK) is a substrate binding site. FMN-binding positions include serine 62, 63 to 65 (AIT), serine 93, and asparagine 122. Substrate is bound at residue 93–95 (SQR). Glutamine 151 provides a ligand contact to substrate. Glutamate 152 lines the Mg(2+) pocket. FMN-binding positions include lysine 183, threonine 213, 259-261 (GIR), and 280-281 (AL).

This sequence belongs to the IPP isomerase type 2 family. In terms of assembly, homooctamer. Dimer of tetramers. FMN is required as a cofactor. The cofactor is NADPH. It depends on Mg(2+) as a cofactor.

It localises to the cytoplasm. The enzyme catalyses isopentenyl diphosphate = dimethylallyl diphosphate. In terms of biological role, involved in the biosynthesis of isoprenoids. Catalyzes the 1,3-allylic rearrangement of the homoallylic substrate isopentenyl (IPP) to its allylic isomer, dimethylallyl diphosphate (DMAPP). In Methanothermobacter thermautotrophicus (strain ATCC 29096 / DSM 1053 / JCM 10044 / NBRC 100330 / Delta H) (Methanobacterium thermoautotrophicum), this protein is Isopentenyl-diphosphate delta-isomerase.